A 369-amino-acid chain; its full sequence is Queuine tRNA-ribosyltransferase (369 aa).

The active-site Proton acceptor is aspartate 89. Residues 89–93 (DSGGF), aspartate 142, glutamine 184, and glycine 211 contribute to the substrate site. Positions 242–248 (GGGSPEL) are RNA binding. Aspartate 261 functions as the Nucleophile in the catalytic mechanism. An RNA binding; important for wobble base 34 recognition region spans residues 266-270 (TRIAR). Residues cysteine 299, cysteine 301, cysteine 304, and histidine 330 each coordinate Zn(2+).

The protein belongs to the queuine tRNA-ribosyltransferase family. In terms of assembly, homodimer. Within each dimer, one monomer is responsible for RNA recognition and catalysis, while the other monomer binds to the replacement base PreQ1. It depends on Zn(2+) as a cofactor.

It catalyses the reaction 7-aminomethyl-7-carbaguanine + guanosine(34) in tRNA = 7-aminomethyl-7-carbaguanosine(34) in tRNA + guanine. It functions in the pathway tRNA modification; tRNA-queuosine biosynthesis. Functionally, catalyzes the base-exchange of a guanine (G) residue with the queuine precursor 7-aminomethyl-7-deazaguanine (PreQ1) at position 34 (anticodon wobble position) in tRNAs with GU(N) anticodons (tRNA-Asp, -Asn, -His and -Tyr). Catalysis occurs through a double-displacement mechanism. The nucleophile active site attacks the C1' of nucleotide 34 to detach the guanine base from the RNA, forming a covalent enzyme-RNA intermediate. The proton acceptor active site deprotonates the incoming PreQ1, allowing a nucleophilic attack on the C1' of the ribose to form the product. After dissociation, two additional enzymatic reactions on the tRNA convert PreQ1 to queuine (Q), resulting in the hypermodified nucleoside queuosine (7-(((4,5-cis-dihydroxy-2-cyclopenten-1-yl)amino)methyl)-7-deazaguanosine). In Thermotoga sp. (strain RQ2), this protein is Queuine tRNA-ribosyltransferase.